The sequence spans 578 residues: NADPH oxidase 4 (578 aa).

Residues 1 to 16 are Cytoplasmic-facing; the sequence is MAVSWRSWLANEGVKH. Residues 17–37 traverse the membrane as a helical segment; sequence LCLLIWLSLNVLLFWKTFLLY. Residues 38-62 lie on the Extracellular side of the membrane; the sequence is NQGPEYYYIHQMLGLGLCLSRASAS. In terms of domain architecture, Ferric oxidoreductase spans 58–303; the sequence is RASASVLNLN…YCAERLYRCI (246 aa). A helical transmembrane segment spans residues 63-83; the sequence is VLNLNCSLILLPMCRTVLAYL. Topologically, residues 84-104 are cytoplasmic; it reads RGSQKVPSRRTRRLLDKSKTL. The helical transmembrane segment at 105-125 threads the bilayer; the sequence is HITCGVTICIFSGVHVAAHLV. Over 126–154 the chain is Extracellular; sequence NALNFSVNYSEDFLELNAARYQNEDPRKL. An N-linked (GlcNAc...) asparagine glycan is attached at Asn-133. A helical transmembrane segment spans residues 155 to 175; the sequence is LFTTIPGLTGVCMVVVLFLMV. Residues 176–188 lie on the Cytoplasmic side of the membrane; the sequence is TASTYAIRVSNYD. The chain crosses the membrane as a helical span at residues 189–209; the sequence is IFWYTHNLFFVFYMLLLLHVS. Residues 210-424 are Extracellular-facing; it reads GGLLKYQTNV…SPFEESLNYE (215 aa). The tract at residues 218 to 273 is E-loop; essential for H2O2 generating catalytic activity; the sequence is NVDTHPPGCISLNQTSSQNMSIPDYVSEHFHGSLPRGFSKLEDRYQKTLVKICLEE. Asn-230 is a glycosylation site (N-linked (GlcNAc...) asparagine). The tract at residues 248 to 575 is mediates interaction with TLR4; it reads HGSLPRGFSK…YGTKFEYNKE (328 aa). The 116-residue stretch at 304-419 folds into the FAD-binding FR-type domain; the sequence is RSNKPVTIIS…DGPFGSPFEE (116 aa). Residues 425-445 form a helical membrane-spanning segment; sequence VSLCVAGGIGVTPFASILNTL. Residues 446 to 578 lie on the Cytoplasmic side of the membrane; it reads LDDWKPYKLR…KFEYNKESFS (133 aa).

In terms of assembly, interacts with, relocalizes and stabilizes CYBA/p22phox. Interacts with TLR4. Interacts with protein disulfide isomerase. Interacts with PPP1R15A. Interacts with LRRC8A; this interaction prevents the ubiquitin-mediated degradation of LRRC8A. The cofactor is heme. N-glycosylation is required for the function. As to expression, EXpressed in brain, in all layers of the cerebellum, in pyramidal cells of the Ammon horn and in Purkinje cells (at protein level). Expressed in osteoclasts, leukocytes, kidney, liver and lung.

Its subcellular location is the cytoplasm. The protein resides in the endoplasmic reticulum membrane. The protein localises to the cell membrane. It is found in the cell junction. It localises to the focal adhesion. Its subcellular location is the nucleus. The catalysed reaction is NADPH + 2 O2 = 2 superoxide + NADP(+) + H(+). The enzyme catalyses NADPH + O2 + H(+) = H2O2 + NADP(+). With respect to regulation, activated by insulin. Inhibited by diphenylene iodonium. Inhibited by plumbagin. Activated by phorbol 12-myristate 13-acetate (PMA). In terms of biological role, NADPH oxidase that catalyzes predominantly the reduction of oxygen to H2O2. Can also catalyze to a smaller extent, the reduction of oxygen to superoxide. May function as an oxygen sensor regulating the KCNK3/TASK-1 potassium channel and HIF1A activity. May regulate insulin signaling cascade. May play a role in apoptosis, bone resorption and lipolysaccharide-mediated activation of NFKB. May produce superoxide in the nucleus and play a role in regulating gene expression upon cell stimulation. Promotes ferroptosis, reactive oxygen species production and reduced glutathione (GSH) levels by activating NLRP3 inflammasome activation and cytokine release. In Mus musculus (Mouse), this protein is NADPH oxidase 4 (Nox4).